The primary structure comprises 401 residues: Tyrosine--tRNA ligase (401 aa).

The short motif at 42–51 (PTAPDLHLGH) is the 'HIGH' region element. The short motif at 226-230 (KMSKS) is the 'KMSKS' region element. K229 lines the ATP pocket. In terms of domain architecture, S4 RNA-binding spans 336 to 397 (IALAQLLKQI…GKRRIAKLSI (62 aa)).

The protein belongs to the class-I aminoacyl-tRNA synthetase family. TyrS type 2 subfamily. In terms of assembly, homodimer.

The protein localises to the cytoplasm. The catalysed reaction is tRNA(Tyr) + L-tyrosine + ATP = L-tyrosyl-tRNA(Tyr) + AMP + diphosphate + H(+). Catalyzes the attachment of tyrosine to tRNA(Tyr) in a two-step reaction: tyrosine is first activated by ATP to form Tyr-AMP and then transferred to the acceptor end of tRNA(Tyr). This is Tyrosine--tRNA ligase from Legionella pneumophila (strain Lens).